Here is a 298-residue protein sequence, read N- to C-terminus: Tyrosine recombinase XerC (298 aa).

The region spanning 2–88 (TDLHTDVERY…ALRSFFDWLV (87 aa)) is the Core-binding (CB) domain. In terms of domain architecture, Tyr recombinase spans 109-288 (HLPKNIDVDD…DFQHLASVYD (180 aa)). Residues Arg148, Lys172, His240, Arg243, and His266 contribute to the active site. Catalysis depends on Tyr275, which acts as the O-(3'-phospho-DNA)-tyrosine intermediate.

The protein belongs to the 'phage' integrase family. XerC subfamily. In terms of assembly, forms a cyclic heterotetrameric complex composed of two molecules of XerC and two molecules of XerD, in which XerC interacts with XerD via its C-terminal region, XerD interacts with XerC via its C-terminal region and so on.

The protein resides in the cytoplasm. Its activity is regulated as follows. FtsK may regulate the catalytic switch between XerC and XerD in the heterotetrameric complex during the two steps of the recombination process. Its function is as follows. Site-specific tyrosine recombinase, which acts by catalyzing the cutting and rejoining of the recombining DNA molecules. Binds cooperatively to specific DNA consensus sequences that are separated from XerD binding sites by a short central region, forming the heterotetrameric XerC-XerD complex that recombines DNA substrates. The complex is essential to convert dimers of the bacterial chromosome into monomers to permit their segregation at cell division. It also contributes to the segregational stability of plasmids. In the complex XerC specifically exchanges the top DNA strands. This chain is Tyrosine recombinase XerC, found in Shigella dysenteriae serotype 1 (strain Sd197).